Consider the following 465-residue polypeptide: Sodium-dependent phosphate transport protein 1 (465 aa).

N47 and N56 each carry an N-linked (GlcNAc...) asparagine glycan. 10 consecutive transmembrane segments (helical) span residues 79–99, 109–129, 171–191, 198–218, 255–275, 304–324, 337–357, 363–383, 399–419, and 428–448; these read GIIF…VGYI, IGFA…AAAV, MSLS…GIIC, MVFY…FVLY, AMIK…YLWT, LPYL…DFLM, LFTA…LYLS, TITF…GALI, VTTL…GLFL, and FKIF…YLIF.

The protein belongs to the major facilitator superfamily. Sodium/anion cotransporter family. As to quaternary structure, interacts with PDZK1. In terms of tissue distribution, kidney cortex and liver.

It is found in the apical cell membrane. The enzyme catalyses 3 Na(+)(out) + phosphate(out) = 3 Na(+)(in) + phosphate(in). It catalyses the reaction urate(out) = urate(in). Functionally, important for the resorption of phosphate by the kidney. May be involved in actively transporting phosphate into cells via Na(+) cotransport in the renal brush border membrane. Plays a role in urate transport in the kidney. The polypeptide is Sodium-dependent phosphate transport protein 1 (SLC17A1) (Oryctolagus cuniculus (Rabbit)).